A 491-amino-acid chain; its full sequence is Probable glycine dehydrogenase (decarboxylating) subunit 2 (491 aa).

K273 is subject to N6-(pyridoxal phosphate)lysine.

Belongs to the GcvP family. C-terminal subunit subfamily. In terms of assembly, the glycine cleavage system is composed of four proteins: P, T, L and H. In this organism, the P 'protein' is a heterodimer of two subunits. Requires pyridoxal 5'-phosphate as cofactor.

The enzyme catalyses N(6)-[(R)-lipoyl]-L-lysyl-[glycine-cleavage complex H protein] + glycine + H(+) = N(6)-[(R)-S(8)-aminomethyldihydrolipoyl]-L-lysyl-[glycine-cleavage complex H protein] + CO2. In terms of biological role, the glycine cleavage system catalyzes the degradation of glycine. The P protein binds the alpha-amino group of glycine through its pyridoxal phosphate cofactor; CO(2) is released and the remaining methylamine moiety is then transferred to the lipoamide cofactor of the H protein. This is Probable glycine dehydrogenase (decarboxylating) subunit 2 from Bacillus thuringiensis (strain Al Hakam).